A 176-amino-acid chain; its full sequence is Isopentenyl-diphosphate Delta-isomerase (176 aa).

Mn(2+)-binding residues include His22 and His28. A Nudix hydrolase domain is found at 26-160 (LRHKAISVFI…PETFTPWLHI (135 aa)). Cys62 is an active-site residue. His64 is a Mn(2+) binding site. Glu82 contacts Mg(2+). Mn(2+) contacts are provided by Glu108 and Glu110. Residue Glu110 is part of the active site.

This sequence belongs to the IPP isomerase type 1 family. Mg(2+) is required as a cofactor. Mn(2+) serves as cofactor.

It is found in the cytoplasm. It carries out the reaction isopentenyl diphosphate = dimethylallyl diphosphate. Its pathway is isoprenoid biosynthesis; dimethylallyl diphosphate biosynthesis; dimethylallyl diphosphate from isopentenyl diphosphate: step 1/1. The protein operates within porphyrin-containing compound metabolism; chlorophyll biosynthesis. Its function is as follows. Catalyzes the 1,3-allylic rearrangement of the homoallylic substrate isopentenyl (IPP) to its highly electrophilic allylic isomer, dimethylallyl diphosphate (DMAPP). The polypeptide is Isopentenyl-diphosphate Delta-isomerase (Jannaschia sp. (strain CCS1)).